We begin with the raw amino-acid sequence, 579 residues long: Trehalase (579 aa).

The first 15 residues, 1-15 (MRLFLLLVGLTTVIA), serve as a signal peptide directing secretion. 2 N-linked (GlcNAc...) asparagine glycosylation sites follow: N29 and N58. Substrate contacts are provided by residues R161, 168–169 (WD), N205, 214–216 (RSQ), 279–281 (RPE), and G313. A glycan (N-linked (GlcNAc...) asparagine) is linked at N205. Catalysis depends on D315, which acts as the Proton donor/acceptor. N-linked (GlcNAc...) asparagine glycosylation is present at N331. The Proton donor/acceptor role is filled by E513. Residue E528 participates in substrate binding. Over residues 560 to 569 (DASANNGQSN) the composition is skewed to polar residues. The disordered stretch occupies residues 560-579 (DASANNGQSNEESETDSKEK).

It belongs to the glycosyl hydrolase 37 family. In terms of tissue distribution, in midgut and Malpighian tubules.

It localises to the basolateral cell membrane. The catalysed reaction is alpha,alpha-trehalose + H2O = alpha-D-glucose + beta-D-glucose. In terms of biological role, involved in uptake of hemolymph trehalose into epithelial cells in the midgut of feeding larvae. This Bombyx mori (Silk moth) protein is Trehalase.